We begin with the raw amino-acid sequence, 143 residues long: Peptide methionine sulfoxide reductase MsrB (143 aa).

One can recognise a MsrB domain in the interval 5–127; that stretch reads NEELKKKLTP…NSAALRFIPK (123 aa). The active-site Nucleophile is the Cys116.

Belongs to the MsrB Met sulfoxide reductase family.

It catalyses the reaction L-methionyl-[protein] + [thioredoxin]-disulfide + H2O = L-methionyl-(R)-S-oxide-[protein] + [thioredoxin]-dithiol. The protein is Peptide methionine sulfoxide reductase MsrB of Halalkalibacterium halodurans (strain ATCC BAA-125 / DSM 18197 / FERM 7344 / JCM 9153 / C-125) (Bacillus halodurans).